The sequence spans 454 residues: Glutamyl-tRNA reductase (454 aa).

Residues 49-52, Ser-109, 114-116, and Gln-120 each bind substrate; these read TCNR and ETQ. Cys-50 serves as the catalytic Nucleophile. Residue 189 to 194 coordinates NADP(+); that stretch reads GAGKMS. The disordered stretch occupies residues 434-454; the sequence is NDKNKQTSSSREQVLVSRFPD.

This sequence belongs to the glutamyl-tRNA reductase family. Homodimer.

It carries out the reaction (S)-4-amino-5-oxopentanoate + tRNA(Glu) + NADP(+) = L-glutamyl-tRNA(Glu) + NADPH + H(+). It participates in porphyrin-containing compound metabolism; protoporphyrin-IX biosynthesis; 5-aminolevulinate from L-glutamyl-tRNA(Glu): step 1/2. Catalyzes the NADPH-dependent reduction of glutamyl-tRNA(Glu) to glutamate 1-semialdehyde (GSA). The protein is Glutamyl-tRNA reductase of Brevibacillus brevis (strain 47 / JCM 6285 / NBRC 100599).